Consider the following 343-residue polypeptide: ATP phosphoribosyltransferase regulatory subunit (343 aa).

Residues Arg324–Arg343 form a disordered region. A compositionally biased stretch (basic residues) spans Gly327–Arg343.

The protein belongs to the class-II aminoacyl-tRNA synthetase family. HisZ subfamily. As to quaternary structure, heteromultimer composed of HisG and HisZ subunits.

It localises to the cytoplasm. Its pathway is amino-acid biosynthesis; L-histidine biosynthesis; L-histidine from 5-phospho-alpha-D-ribose 1-diphosphate: step 1/9. Functionally, required for the first step of histidine biosynthesis. May allow the feedback regulation of ATP phosphoribosyltransferase activity by histidine. The protein is ATP phosphoribosyltransferase regulatory subunit of Anaeromyxobacter sp. (strain Fw109-5).